The chain runs to 1620 residues: NAD-specific glutamate dehydrogenase (1620 aa).

Residue Lys-851 is part of the active site.

It belongs to the Glu/Leu/Phe/Val dehydrogenases family. In terms of assembly, homotetramer. In terms of processing, contains disulfide bonds (interchain).

The enzyme catalyses L-glutamate + NAD(+) + H2O = 2-oxoglutarate + NH4(+) + NADH + H(+). Activity subject to allosteric control by arginine and citrate, which function as positive and negative effectors, respectively. In terms of biological role, involved in arginine catabolism by converting L-glutamate, into 2-oxoglutarate, which is then channeled into the tricarboxylic acid cycle. Can also utilize other amino acids of the glutamate family. The protein is NAD-specific glutamate dehydrogenase (gdhB) of Pseudomonas aeruginosa (strain ATCC 15692 / DSM 22644 / CIP 104116 / JCM 14847 / LMG 12228 / 1C / PRS 101 / PAO1).